Here is a 291-residue protein sequence, read N- to C-terminus: Small ribosomal subunit biogenesis GTPase RsgA (291 aa).

One can recognise a CP-type G domain in the interval 63 to 221 (KNELKRPPVS…IADTPGFSAL (159 aa)). Residues 112 to 115 (TKKD) and 164 to 172 (GQSGVGKST) contribute to the GTP site. Positions 245, 250, 252, and 258 each coordinate Zn(2+).

This sequence belongs to the TRAFAC class YlqF/YawG GTPase family. RsgA subfamily. As to quaternary structure, monomer. Associates with 30S ribosomal subunit, binds 16S rRNA. Zn(2+) is required as a cofactor.

Its subcellular location is the cytoplasm. One of several proteins that assist in the late maturation steps of the functional core of the 30S ribosomal subunit. Helps release RbfA from mature subunits. May play a role in the assembly of ribosomal proteins into the subunit. Circularly permuted GTPase that catalyzes slow GTP hydrolysis, GTPase activity is stimulated by the 30S ribosomal subunit. The sequence is that of Small ribosomal subunit biogenesis GTPase RsgA from Staphylococcus aureus (strain MRSA252).